A 213-amino-acid chain; its full sequence is Type II restriction enzyme BamHI (213 aa).

The Mg(2+) site is built by Glu77, Asp94, Glu111, and Phe112. Glu113 (proton acceptor) is an active-site residue.

In terms of assembly, homodimer. Mg(2+) is required as a cofactor.

It catalyses the reaction Endonucleolytic cleavage of DNA to give specific double-stranded fragments with terminal 5'-phosphates.. A P subtype restriction enzyme that recognizes the double-stranded sequence 5'-GGATCC-3' and cleaves after G-1. This Bacillus amyloliquefaciens (Bacillus velezensis) protein is Type II restriction enzyme BamHI.